The sequence spans 238 residues: Urease subunit alpha (238 aa).

Residues 1 to 102 (MKLTPKELDK…LVTVHTPIEA (102 aa)) are urease gamma. Residues 103–238 (NGKLVPGELF…DDNYVKTIKE (136 aa)) are urease beta.

In the N-terminal section; belongs to the urease gamma subunit family. It in the C-terminal section; belongs to the urease beta subunit family. As to quaternary structure, heterohexamer of 3 UreA (alpha) and 3 UreB (beta) subunits. Four heterohexamers assemble to form a 16 nm dodecameric complex.

It catalyses the reaction urea + 2 H2O + H(+) = hydrogencarbonate + 2 NH4(+). It functions in the pathway nitrogen metabolism; urea degradation; CO(2) and NH(3) from urea (urease route): step 1/1. This is Urease subunit alpha from Helicobacter pylori (strain J99 / ATCC 700824) (Campylobacter pylori J99).